We begin with the raw amino-acid sequence, 451 residues long: Glycine--tRNA ligase (451 aa).

Residues R94 and E164 each contribute to the substrate site. Residues 196–198, 206–211, 281–282, and 325–328 each bind ATP; these read RNE, FRTREF, EL, and GVER. 211–215 provides a ligand contact to substrate; sequence FEQME. 321–325 is a binding site for substrate; the sequence is EPSVG.

The protein belongs to the class-II aminoacyl-tRNA synthetase family. In terms of assembly, homodimer.

Its subcellular location is the cytoplasm. It catalyses the reaction tRNA(Gly) + glycine + ATP = glycyl-tRNA(Gly) + AMP + diphosphate. Its function is as follows. Catalyzes the attachment of glycine to tRNA(Gly). This chain is Glycine--tRNA ligase, found in Mesoplasma florum (strain ATCC 33453 / NBRC 100688 / NCTC 11704 / L1) (Acholeplasma florum).